Consider the following 189-residue polypeptide: Peptidyl-tRNA hydrolase (189 aa).

Position 15 (Y15) interacts with tRNA. Residue H20 is the Proton acceptor of the active site. Residues F66, N68, and N114 each contribute to the tRNA site.

The protein belongs to the PTH family. As to quaternary structure, monomer.

Its subcellular location is the cytoplasm. The enzyme catalyses an N-acyl-L-alpha-aminoacyl-tRNA + H2O = an N-acyl-L-amino acid + a tRNA + H(+). Functionally, hydrolyzes ribosome-free peptidyl-tRNAs (with 1 or more amino acids incorporated), which drop off the ribosome during protein synthesis, or as a result of ribosome stalling. Its function is as follows. Catalyzes the release of premature peptidyl moieties from peptidyl-tRNA molecules trapped in stalled 50S ribosomal subunits, and thus maintains levels of free tRNAs and 50S ribosomes. In Acidithiobacillus ferrooxidans (strain ATCC 23270 / DSM 14882 / CIP 104768 / NCIMB 8455) (Ferrobacillus ferrooxidans (strain ATCC 23270)), this protein is Peptidyl-tRNA hydrolase.